A 362-amino-acid chain; its full sequence is Vignain (362 aa).

The N-terminal stretch at 1–20 is a signal peptide; that stretch reads MAMKKLLWVVLSLSLVLGVA. Residues 21 to 126 constitute a propeptide, activation peptide; that stretch reads NSFDFHEKDL…SGTFMYEKVG (106 aa). Disulfide bonds link Cys149–Cys191, Cys183–Cys224, and Cys282–Cys334. Residue Cys152 is part of the active site. Catalysis depends on residues His288 and Asn309. N-linked (GlcNAc...) asparagine glycans are attached at residues Asn326 and Asn346. Positions 353 to 362 are cleaved as a propeptide — removed in mature form; that stretch reads GSLSSPKDEL. The Prevents secretion from ER motif lies at 359–362; the sequence is KDEL.

This sequence belongs to the peptidase C1 family. The mature protein is not glycosylated. Post-translationally, the precursor stored in the endoplasmic reticulum lumen is processed during the transport to proteins bodies to two dominant mature forms that differ by a single amino acid residue at the N-terminus.

It localises to the endoplasmic reticulum lumen. Its subcellular location is the vacuole. The protein localises to the aleurone grain. Thought to be involved in the hydrolysis of stored seed proteins. In vitro, catalyzes the hydrolysis of proteins, such as azocasein. Shows a preferential cleavage for Asn-|-Xaa in small molecule substrates such as Boc-Asn-|-OPHNO(2). The polypeptide is Vignain (Vigna mungo (Black gram)).